We begin with the raw amino-acid sequence, 465 residues long: Iron-sulfur cluster assembly SufBD family protein SSP1857 (465 aa).

Belongs to the iron-sulfur cluster assembly SufBD family.

The sequence is that of Iron-sulfur cluster assembly SufBD family protein SSP1857 from Staphylococcus saprophyticus subsp. saprophyticus (strain ATCC 15305 / DSM 20229 / NCIMB 8711 / NCTC 7292 / S-41).